The sequence spans 252 residues: Demethylmenaquinone methyltransferase (252 aa).

S-adenosyl-L-methionine-binding positions include Thr-64, Asp-85, and 112-113; that span reads NA.

The protein belongs to the class I-like SAM-binding methyltransferase superfamily. MenG/UbiE family.

The catalysed reaction is a 2-demethylmenaquinol + S-adenosyl-L-methionine = a menaquinol + S-adenosyl-L-homocysteine + H(+). The protein operates within quinol/quinone metabolism; menaquinone biosynthesis; menaquinol from 1,4-dihydroxy-2-naphthoate: step 2/2. Functionally, methyltransferase required for the conversion of demethylmenaquinol (DMKH2) to menaquinol (MKH2). This chain is Demethylmenaquinone methyltransferase, found in Lactococcus lactis subsp. lactis (strain IL1403) (Streptococcus lactis).